We begin with the raw amino-acid sequence, 455 residues long: UDP-N-acetylmuramoylalanine--D-glutamate ligase (455 aa).

Residue 118–124 (GTNGKST) coordinates ATP.

The protein belongs to the MurCDEF family.

It is found in the cytoplasm. It carries out the reaction UDP-N-acetyl-alpha-D-muramoyl-L-alanine + D-glutamate + ATP = UDP-N-acetyl-alpha-D-muramoyl-L-alanyl-D-glutamate + ADP + phosphate + H(+). It functions in the pathway cell wall biogenesis; peptidoglycan biosynthesis. Functionally, cell wall formation. Catalyzes the addition of glutamate to the nucleotide precursor UDP-N-acetylmuramoyl-L-alanine (UMA). The chain is UDP-N-acetylmuramoylalanine--D-glutamate ligase from Myxococcus xanthus (strain DK1622).